The following is an 89-amino-acid chain: Small ribosomal subunit protein uS15 (89 aa).

The tract at residues 1-25 (MSLDTTEKQQLINTHQTHGTDTGSA) is disordered. The segment covering 8–25 (KQQLINTHQTHGTDTGSA) has biased composition (polar residues).

Belongs to the universal ribosomal protein uS15 family. In terms of assembly, part of the 30S ribosomal subunit. Forms a bridge to the 50S subunit in the 70S ribosome, contacting the 23S rRNA.

One of the primary rRNA binding proteins, it binds directly to 16S rRNA where it helps nucleate assembly of the platform of the 30S subunit by binding and bridging several RNA helices of the 16S rRNA. Its function is as follows. Forms an intersubunit bridge (bridge B4) with the 23S rRNA of the 50S subunit in the ribosome. This is Small ribosomal subunit protein uS15 from Synechococcus sp. (strain CC9605).